The sequence spans 865 residues: Taste receptor type 1 member 3 (865 aa).

The first 24 residues, 1-24, serve as a signal peptide directing secretion; the sequence is MPGLALLGLTALLGLTALLDHGEG. Topologically, residues 25 to 573 are extracellular; it reads ATSCLSQQLR…FLAWGEPAVL (549 aa). Asparagine 134 and asparagine 267 each carry an N-linked (GlcNAc...) asparagine glycan. Residues 574–594 traverse the membrane as a helical segment; the sequence is LLLALLALALGLALAALGLFL. Residues 595–606 are Cytoplasmic-facing; the sequence is WHSDSPLVQASG. Residues 607 to 627 traverse the membrane as a helical segment; it reads GPRACFGLACLGLVCLSVLLF. At 628-642 the chain is on the extracellular side; sequence PGQPGPASCLAQQPL. The helical transmembrane segment at 643-663 threads the bilayer; that stretch reads FHLPLTGCLSTFFLQAAEIFV. The Cytoplasmic portion of the chain corresponds to 664–685; the sequence is GSELPPSWAEKMRGRLRGPWAW. A helical transmembrane segment spans residues 686–706; that stretch reads LVVLLAMLAEAALCAWYLVAF. The Extracellular segment spans residues 707–732; that stretch reads PPEVVTDWRVLPTEALVHCHVHSWIS. The chain crosses the membrane as a helical span at residues 733 to 753; it reads FGLVHATNAMLAFLCFLGTFL. Residues 754 to 765 lie on the Cytoplasmic side of the membrane; that stretch reads VQSRPGRYNGAR. A helical membrane pass occupies residues 766–786; it reads GLTFAMLAYFITWISFVPLFA. Residues 787 to 794 are Extracellular-facing; it reads NVHVAYQP. A helical membrane pass occupies residues 795–815; sequence AVQMGTILLCALGILATFHLP. The Cytoplasmic portion of the chain corresponds to 816–865; the sequence is KCYLLLQRPELNTPEFFLEDNARAQGSSWGQGRGESGQKQVTPDPVTSPQ. Residues 840–865 form a disordered region; that stretch reads QGSSWGQGRGESGQKQVTPDPVTSPQ. Polar residues predominate over residues 852–865; that stretch reads GQKQVTPDPVTSPQ.

This sequence belongs to the G-protein coupled receptor 3 family. TAS1R subfamily. Forms homodimers or a heterodimer with TAS1R1. In terms of tissue distribution, expressed in taste buds.

The protein resides in the cell membrane. Functionally, putative taste receptor. TAS1R1/TAS1R3 responds to the umami taste stimulus (the taste of monosodium glutamate). The protein is Taste receptor type 1 member 3 (TAS1R3) of Felis catus (Cat).